A 153-amino-acid polypeptide reads, in one-letter code: Large ribosomal subunit protein uL15 (153 aa).

Positions 15 to 42 (ARRIVGRGSSSGRGTTSGRGTKGQQARA) are disordered. Residues 23 to 35 (SSSGRGTTSGRGT) are compositionally biased toward gly residues.

It belongs to the universal ribosomal protein uL15 family. In terms of assembly, part of the 50S ribosomal subunit.

Functionally, binds to the 23S rRNA. The protein is Large ribosomal subunit protein uL15 of Treponema pallidum (strain Nichols).